A 331-amino-acid chain; its full sequence is Thiamine-monophosphate kinase (331 aa).

Mg(2+) is bound by residues D43, T59, T60, and D61. H68 serves as a coordination point for substrate. Mg(2+) contacts are provided by D90, D138, and D231. 137-138 (GD) lines the ATP pocket. S233 provides a ligand contact to ATP. D234 is a Mg(2+) binding site. Substrate-binding residues include E284 and W328.

This sequence belongs to the thiamine-monophosphate kinase family.

It carries out the reaction thiamine phosphate + ATP = thiamine diphosphate + ADP. The protein operates within cofactor biosynthesis; thiamine diphosphate biosynthesis; thiamine diphosphate from thiamine phosphate: step 1/1. Its function is as follows. Catalyzes the ATP-dependent phosphorylation of thiamine-monophosphate (TMP) to form thiamine-pyrophosphate (TPP), the active form of vitamin B1. The chain is Thiamine-monophosphate kinase from Corynebacterium glutamicum (strain ATCC 13032 / DSM 20300 / JCM 1318 / BCRC 11384 / CCUG 27702 / LMG 3730 / NBRC 12168 / NCIMB 10025 / NRRL B-2784 / 534).